The chain runs to 220 residues: 7-cyano-7-deazaguanine synthase (220 aa).

Position 7 to 17 (7 to 17) interacts with ATP; sequence ISGGMDSSTAA. Zn(2+)-binding residues include Cys187, Cys195, Cys198, and Cys201.

It belongs to the QueC family. Requires Zn(2+) as cofactor.

It catalyses the reaction 7-carboxy-7-deazaguanine + NH4(+) + ATP = 7-cyano-7-deazaguanine + ADP + phosphate + H2O + H(+). Its pathway is purine metabolism; 7-cyano-7-deazaguanine biosynthesis. Catalyzes the ATP-dependent conversion of 7-carboxy-7-deazaguanine (CDG) to 7-cyano-7-deazaguanine (preQ(0)). The protein is 7-cyano-7-deazaguanine synthase of Campylobacter hominis (strain ATCC BAA-381 / DSM 21671 / CCUG 45161 / LMG 19568 / NCTC 13146 / CH001A).